Consider the following 923-residue polypeptide: MDYKQTLLMPKTAFPMRGNLPNSEPKRQEQWEEMDIYKQVQERTEGRPYFVLHDGPPYANGDIHMGHALNKIIKDFIVRYKSMSGFHAPYVPGWDTHGLPIETALTKNKKVDRKSMSIADFRKLCEEYALEQINSQRQQFMRLGVRGDWWKPYITLEKEFEAEQIKVFGKMAKKGYIYKGKKPVYWSPSSESALAEAEIEYYDKRSASIYVAFQVADGKGVLPEDAALVIWTTTPWTIPANLGITVHPQLEYSVVRTGGRSFVVASGLLEHVQTELSWEDVVVEKTVTGKELDYIVCRHPFYDRDSIVMNGEHVTLDAGTGCVHTAPGHGVDDFVVGQKYGLDVLCPIDDKGIMTSEAPGFEGEFYDNINKMVTEKLEAVGALLKLGFITHSYPHDWRTKKPVIFRATSQWFASIANIRKELLQAVANTEWIPAWGETRLHNMVRDRGDWCISRQRAWGVPIPVFYGEDGTEIVSEETIEHVSNLFREHGSNVWFEREAKDLLPPGFTSPHSPNGHFTKETDIMDVWFDSGSSHQGVLRERNDLVFPADLYFEGSDQYRGWFNSSLSTSVAINGVAPYKGVLSHGFVMDGEGKKMSKSLGNIVVPNTVMKQLGADILRLWVASVDYQADSRVSDSILKQVAETYRKIRNTFRFLLGNLHDFDPKINAVPRDQLTGVHAFLLVRLNELTKRMHEGYNEYQFLNVYNHFRNFCTVELSSFYMDISKDTLYIEHADHPERRAFQTVMYEVVTALTKLIAPILPHTADEVWENIPGVSEQSVQLTDMPTAEELSGTDELKAHWQAFMDIRADVLKALEVARNEKVIGKSLQASLTLYPNKQARALLEATEGLKKLFIVSNVQIANEGDEVPAAAQQFADVAVLVEKAEGETCERCWQVSNTVGADEKHPTLCLSCAQTVTNHYNDVV.

Positions 57 to 67 match the 'HIGH' region motif; it reads PYANGDIHMGH. Position 553 (glutamate 553) interacts with L-isoleucyl-5'-AMP. A 'KMSKS' region motif is present at residues 594–598; the sequence is KMSKS. Lysine 597 lines the ATP pocket. Positions 888, 891, 908, and 911 each coordinate Zn(2+).

This sequence belongs to the class-I aminoacyl-tRNA synthetase family. IleS type 1 subfamily. Monomer. Zn(2+) serves as cofactor.

The protein resides in the cytoplasm. The catalysed reaction is tRNA(Ile) + L-isoleucine + ATP = L-isoleucyl-tRNA(Ile) + AMP + diphosphate. Functionally, catalyzes the attachment of isoleucine to tRNA(Ile). As IleRS can inadvertently accommodate and process structurally similar amino acids such as valine, to avoid such errors it has two additional distinct tRNA(Ile)-dependent editing activities. One activity is designated as 'pretransfer' editing and involves the hydrolysis of activated Val-AMP. The other activity is designated 'posttransfer' editing and involves deacylation of mischarged Val-tRNA(Ile). The protein is Isoleucine--tRNA ligase of Shouchella clausii (strain KSM-K16) (Alkalihalobacillus clausii).